Reading from the N-terminus, the 62-residue chain is Protein DsrB (62 aa).

Belongs to the DsrB family.

This is Protein DsrB from Shigella boydii serotype 18 (strain CDC 3083-94 / BS512).